The primary structure comprises 502 residues: Acetyl-coenzyme A carboxylase carboxyl transferase subunit beta, chloroplastic (502 aa).

Residues 191 to 202 (GSDSESSSIRTS) show a composition bias toward low complexity. Residues 191–212 (GSDSESSSIRTSGNDSNFNVRE) are disordered. The CoA carboxyltransferase N-terminal domain occupies 226 to 497 (LWVQCENCYE…NQNSSGARGS (272 aa)). Zn(2+) contacts are provided by C230, C233, C249, and C252. The segment at 230 to 252 (CENCYELNYRSFFRSKMNICEQC) adopts a C4-type zinc-finger fold.

This sequence belongs to the AccD/PCCB family. Acetyl-CoA carboxylase is a heterohexamer composed of biotin carboxyl carrier protein, biotin carboxylase and 2 subunits each of ACCase subunit alpha and ACCase plastid-coded subunit beta (accD). Zn(2+) serves as cofactor.

It localises to the plastid. Its subcellular location is the chloroplast stroma. The enzyme catalyses N(6)-carboxybiotinyl-L-lysyl-[protein] + acetyl-CoA = N(6)-biotinyl-L-lysyl-[protein] + malonyl-CoA. It participates in lipid metabolism; malonyl-CoA biosynthesis; malonyl-CoA from acetyl-CoA: step 1/1. Component of the acetyl coenzyme A carboxylase (ACC) complex. Biotin carboxylase (BC) catalyzes the carboxylation of biotin on its carrier protein (BCCP) and then the CO(2) group is transferred by the transcarboxylase to acetyl-CoA to form malonyl-CoA. The chain is Acetyl-coenzyme A carboxylase carboxyl transferase subunit beta, chloroplastic from Chloranthus spicatus (Chulantree).